Consider the following 266-residue polypeptide: Glutamate racemase (266 aa).

Residues 9-10 and 41-42 contribute to the substrate site; these read DS and YG. Catalysis depends on cysteine 72, which acts as the Proton donor/acceptor. Residue 73–74 participates in substrate binding; that stretch reads NT. Cysteine 183 functions as the Proton donor/acceptor in the catalytic mechanism. 184 to 185 serves as a coordination point for substrate; sequence TH.

The protein belongs to the aspartate/glutamate racemases family.

It carries out the reaction L-glutamate = D-glutamate. Its pathway is cell wall biogenesis; peptidoglycan biosynthesis. In terms of biological role, provides the (R)-glutamate required for cell wall biosynthesis. The protein is Glutamate racemase of Listeria innocua serovar 6a (strain ATCC BAA-680 / CLIP 11262).